The primary structure comprises 257 residues: Type III pantothenate kinase (257 aa).

5-12 (DIGNTNIK) is an ATP binding site. Position 107 to 110 (107 to 110 (GSDR)) interacts with substrate. Catalysis depends on D109, which acts as the Proton acceptor. ATP is bound at residue T133.

The protein belongs to the type III pantothenate kinase family. In terms of assembly, homodimer. NH4(+) is required as a cofactor. K(+) serves as cofactor.

The protein resides in the cytoplasm. It catalyses the reaction (R)-pantothenate + ATP = (R)-4'-phosphopantothenate + ADP + H(+). It functions in the pathway cofactor biosynthesis; coenzyme A biosynthesis; CoA from (R)-pantothenate: step 1/5. Its function is as follows. Catalyzes the phosphorylation of pantothenate (Pan), the first step in CoA biosynthesis. This chain is Type III pantothenate kinase, found in Ehrlichia ruminantium (strain Welgevonden).